Reading from the N-terminus, the 221-residue chain is Max dimerization protein 1 (221 aa).

Residues 21-49 (RREREAEHGYASMLPYNSKERDGLKRKSK) carry the Nuclear localization signal motif. 2 disordered regions span residues 29–67 (GYAS…EKNR) and 178–221 (SSSS…SIAL). Residues 55-107 (SSRSTHNEMEKNRRAHLRLCLEKLKMLVPLGPESNRHTTLSLLMRAKLHIKKL) form the bHLH domain. Positions 193–221 (MQSICSDEGYSSSGLKSIGLQNNPKSIAL) are enriched in polar residues.

As to quaternary structure, heterodimer with MAX; the interaction is required for DNA-binding. DNA binding requires dimerization with another bHLH protein; does not form homodimers, and does not bind to DNA in the absence of MAX in vitro. As to expression, expressed primarily in cells that have undergone terminal differentiation including notochord, floor plate and cement gland.

Its subcellular location is the nucleus. Component of a transcriptional repressor complex together with MAX. In complex with MAX binds to the core DNA sequence 5'-CAC[GA]TG-3'. Antagonizes MYC transcriptional activity by competing with MYC for MAX binding. Binds to the TERT promoter and represses telomerase expression, possibly by interfering with MYC binding. In Xenopus laevis (African clawed frog), this protein is Max dimerization protein 1 (mxd1).